Reading from the N-terminus, the 60-residue chain is Large ribosomal subunit protein bL33 (60 aa).

Belongs to the bacterial ribosomal protein bL33 family.

The chain is Large ribosomal subunit protein bL33 from Flavobacterium johnsoniae (strain ATCC 17061 / DSM 2064 / JCM 8514 / BCRC 14874 / CCUG 350202 / NBRC 14942 / NCIMB 11054 / UW101) (Cytophaga johnsonae).